The primary structure comprises 61 residues: Venom protein 22.1 (61 aa).

The signal sequence occupies residues 1–18; the sequence is MDIKGLLVILFFVLLITG.

The protein belongs to the non-disulfide-bridged peptide (NDBP) superfamily. Long chain multifunctional peptide (group 2) family. Expressed by the venom gland.

It is found in the secreted. The chain is Venom protein 22.1 from Lychas mucronatus (Chinese swimming scorpion).